The chain runs to 378 residues: Squalene methyltransferase 2 (378 aa).

Residues 17 to 37 (LLTVKGATGLIAALILGYIII) form a helical membrane-spanning segment.

This sequence belongs to the class I-like SAM-binding methyltransferase superfamily. Erg6/SMT family.

The protein localises to the microsome membrane. The catalysed reaction is squalene + 2 S-adenosyl-L-methionine = 3,22-dimethyl-1,2,23,24-tetradehydro-2,3,22,23-tetrahydrosqualene + 2 S-adenosyl-L-homocysteine + 2 H(+). In terms of biological role, converts squalene to mono- and dimethyl derivatives, but not to tri- and tetramethylated products. Unable to methylate cycloartenol, zymosterol or lanosterol. Methylates both C-3 and C22 positions, but only C-3 position in monomethylated products. Produces mainly monomethylated squalene and only 20% of dimethylated squalene. This is Squalene methyltransferase 2 (TMT-2) from Botryococcus braunii (Green alga).